The chain runs to 350 residues: MHIYTYWGLKYVPSNSTMVAKEGDLILLGNEVHKVVKVLHRFRNITDLQITNWKGTETRYNLHVTEYKVLVPYDTHKEENEAMSDSLITHNGKDYVLCKIPARVGDLIRTEDKRVWEVLQKSKDGLVLYNEEKGEQRSAVYSEIGPYHVLVPRDTDTHTPTREELAAVIMNKAFTRTETQDSQEDTGTHKGLGLTGTDLYHSLRDLDAKVQSGYYTATENEEDVKSEIEATKKHMKAVKESGKTVNDYRKEENTKRCKLKALTNKFNRLFLKSVIDTDSLQVGKAYLIGGRDMKNVHGLYTGTTFDQQHANFLIVETDRMHRTLTVSAEQLFAEERHIVDIEKRVEQTED.

237–244 (AVKESGKT) contacts ATP.

This Bacillus phage SP01 (Bacteriophage SP01) protein is Gene 40 protein (40).